Consider the following 329-residue polypeptide: Eukaryotic translation initiation factor 2 subunit 1 (329 aa).

Residues 24 to 95 enclose the S1 motif domain; the sequence is DDLIMVKVNR…QKGYIDLSKR (72 aa). Residue serine 59 is modified to Phosphoserine; by eIK1, eIK2 and PK4. Residues 291–329 form a disordered region; the sequence is LDKHDGISSDDDDYNTSDEDDENSSEEDENTSEDEEEED. The segment covering 298-329 has biased composition (acidic residues); that stretch reads SSDDDDYNTSDEDDENSSEEDENTSEDEEEED.

It belongs to the eIF-2-alpha family. Post-translationally, phosphorylated at Ser-59 by eIK1 in response to amino acid starvation. Phosphorylates at Ser-59 in schizonts and gametocytes but not in rings and young trophozoites. Phosphorylates at Ser-59 by eIK2 in salivary gland sporozoites but not in midgut and hemocoel sporozoites. Dephosphorylated at Ser-59 by UIS2. Phosphorylation of eIF2alpha subunit of the pre-initiation complex eIF2 inhibits recycling of inactive eIF2-GDP to active eIF2-GTP by limiting the activity of the guanine nucleotide exchange factor eIF2B and thus, inhibits protein translation.

It is found in the cytoplasm. The protein localises to the stress granule. Functionally, functions in the early steps of protein synthesis by forming a ternary complex with GTP and initiator tRNA. May regulate protein translation in response to amino acid starvation. May regulate protein at various stages of parasite development. The sequence is that of Eukaryotic translation initiation factor 2 subunit 1 from Plasmodium falciparum (isolate 3D7).